A 234-amino-acid polypeptide reads, in one-letter code: 7-cyano-7-deazaguanine synthase (234 aa).

15–25 contacts ATP; sequence LSGGLDSSTCL. Positions 199, 208, 211, and 214 each coordinate Zn(2+).

This sequence belongs to the QueC family. Zn(2+) is required as a cofactor.

It carries out the reaction 7-carboxy-7-deazaguanine + NH4(+) + ATP = 7-cyano-7-deazaguanine + ADP + phosphate + H2O + H(+). It participates in purine metabolism; 7-cyano-7-deazaguanine biosynthesis. Functionally, catalyzes the ATP-dependent conversion of 7-carboxy-7-deazaguanine (CDG) to 7-cyano-7-deazaguanine (preQ(0)). The polypeptide is 7-cyano-7-deazaguanine synthase (Anaeromyxobacter dehalogenans (strain 2CP-C)).